The sequence spans 552 residues: Urocanate hydratase (552 aa).

Residues 49–50 (GG), Gln-127, 173–175 (GMG), Asp-193, 239–240 (NA), 260–264 (QTSAH), 270–271 (YI), and Tyr-319 each bind NAD(+). Cys-407 is an active-site residue. Residue Gly-489 coordinates NAD(+).

This sequence belongs to the urocanase family. It depends on NAD(+) as a cofactor.

The protein localises to the cytoplasm. It catalyses the reaction 4-imidazolone-5-propanoate = trans-urocanate + H2O. It participates in amino-acid degradation; L-histidine degradation into L-glutamate; N-formimidoyl-L-glutamate from L-histidine: step 2/3. Catalyzes the conversion of urocanate to 4-imidazolone-5-propionate. This chain is Urocanate hydratase, found in Bacillus cereus (strain AH187).